The following is a 427-amino-acid chain: Mitochondrial fission protein ELM1 (427 aa).

As to quaternary structure, interacts with DRP3 and DRP3B.

It is found in the mitochondrion outer membrane. Functionally, plant-specific factor involved in mitochondria fission. Is required for the correct localization of DRP3A from the cytosol to mitochondrial fission sites. Does not seem to be required for peroxisomal division. This is Mitochondrial fission protein ELM1 (ELM1) from Arabidopsis thaliana (Mouse-ear cress).